The chain runs to 190 residues: Ribosome hibernation promotion factor (190 aa).

This sequence belongs to the HPF/YfiA ribosome-associated protein family. Long HPF subfamily. Interacts with 100S ribosomes.

Its subcellular location is the cytoplasm. Required for dimerization of active 70S ribosomes into 100S ribosomes in stationary phase; 100S ribosomes are translationally inactive and sometimes present during exponential growth. This Staphylococcus saprophyticus subsp. saprophyticus (strain ATCC 15305 / DSM 20229 / NCIMB 8711 / NCTC 7292 / S-41) protein is Ribosome hibernation promotion factor.